Here is an 85-residue protein sequence, read N- to C-terminus: Large ribosomal subunit protein bL31B (85 aa).

This sequence belongs to the bacterial ribosomal protein bL31 family. Type B subfamily. In terms of assembly, part of the 50S ribosomal subunit.

This chain is Large ribosomal subunit protein bL31B, found in Staphylococcus saprophyticus subsp. saprophyticus (strain ATCC 15305 / DSM 20229 / NCIMB 8711 / NCTC 7292 / S-41).